The primary structure comprises 92 residues: Small ribosomal subunit protein bS20 (92 aa).

The interval 1–23 (MANSPSAKKRAIQAEKRRSHNAS) is disordered.

This sequence belongs to the bacterial ribosomal protein bS20 family.

In terms of biological role, binds directly to 16S ribosomal RNA. The protein is Small ribosomal subunit protein bS20 of Stutzerimonas stutzeri (strain A1501) (Pseudomonas stutzeri).